Reading from the N-terminus, the 275-residue chain is Cytochrome c oxidase subunit 3 (275 aa).

7 helical membrane passes run 22–42, 52–72, 96–116, 132–152, 173–193, 211–231, and 253–273; these read PWPL…VMYF, SGAL…ALWF, GVAL…WAFF, PVGI…ILLL, AILG…CQGI, FFFS…FIAV, and ILYW…VYWW.

It belongs to the cytochrome c oxidase subunit 3 family. In terms of assembly, component of the cytochrome c oxidase (complex IV, CIV), a multisubunit enzyme composed of a catalytic core of 3 subunits and several supernumerary subunits. The complex exists as a monomer or a dimer and forms supercomplexes (SCs) in the inner mitochondrial membrane with ubiquinol-cytochrome c oxidoreductase (cytochrome b-c1 complex, complex III, CIII).

The protein localises to the mitochondrion inner membrane. The catalysed reaction is 4 Fe(II)-[cytochrome c] + O2 + 8 H(+)(in) = 4 Fe(III)-[cytochrome c] + 2 H2O + 4 H(+)(out). Its function is as follows. Component of the cytochrome c oxidase, the last enzyme in the mitochondrial electron transport chain which drives oxidative phosphorylation. The respiratory chain contains 3 multisubunit complexes succinate dehydrogenase (complex II, CII), ubiquinol-cytochrome c oxidoreductase (cytochrome b-c1 complex, complex III, CIII) and cytochrome c oxidase (complex IV, CIV), that cooperate to transfer electrons derived from NADH and succinate to molecular oxygen, creating an electrochemical gradient over the inner membrane that drives transmembrane transport and the ATP synthase. Cytochrome c oxidase is the component of the respiratory chain that catalyzes the reduction of oxygen to water. Electrons originating from reduced cytochrome c in the intermembrane space (IMS) are transferred via the dinuclear copper A center (CU(A)) of subunit 2 and heme A of subunit 1 to the active site in subunit 1, a binuclear center (BNC) formed by heme A3 and copper B (CU(B)). The BNC reduces molecular oxygen to 2 water molecules using 4 electrons from cytochrome c in the IMS and 4 protons from the mitochondrial matrix. The protein is Cytochrome c oxidase subunit 3 (COX3) of Mycosarcoma maydis (Corn smut fungus).